An 89-amino-acid polypeptide reads, in one-letter code: MSALYDNEAKIRQAVGMLQKIVNDTSVPRNIRRAATDAIRNLQDQTLSPAVRAANAIGILEEISQDPNMPMHTRIAIWNVVSMLETVKD.

Belongs to the UPF0147 family.

In Sulfolobus acidocaldarius (strain ATCC 33909 / DSM 639 / JCM 8929 / NBRC 15157 / NCIMB 11770), this protein is UPF0147 protein Saci_0891.